Reading from the N-terminus, the 364-residue chain is Heavy metal-associated isoprenylated plant protein 35 (364 aa).

Positions 1 to 12 are enriched in basic and acidic residues; that stretch reads MATDEMKSETKK. The interval 1 to 33 is disordered; the sequence is MATDEMKSETKKTEHKQKQSTQIKQDLPPPTIP. The HMA domain maps to 39 to 102; that stretch reads YKSCTLKVSI…KLNKAGKNAE (64 aa). A metal cation contacts are provided by C50 and C53. Residues 101 to 265 form a disordered region; it reads AEQLPEIPDP…PPTATDYDRP (165 aa). Basic and acidic residues predominate over residues 111 to 122; the sequence is VDNKPKPVDPKE. Residues 134-144 are compositionally biased toward polar residues; sequence QITNEATSSGI. 2 stretches are compositionally biased toward basic and acidic residues: residues 154–169 and 180–198; these read ECDK…EKCL and VKEE…KEES. Polar residues predominate over residues 237–253; it reads SLATTNNPTDGPARTQS. C361 carries the cysteine methyl ester modification. C361 is lipidated: S-farnesyl cysteine. The propeptide at 362–364 is removed in mature form; the sequence is AIM.

Belongs to the HIPP family.

Heavy-metal-binding protein. The sequence is that of Heavy metal-associated isoprenylated plant protein 35 from Arabidopsis thaliana (Mouse-ear cress).